The following is a 443-amino-acid chain: UDP-N-acetylmuramate--L-alanine ligase (443 aa).

110 to 116 contributes to the ATP binding site; that stretch reads GAHGKTS.

The protein belongs to the MurCDEF family.

It localises to the cytoplasm. The catalysed reaction is UDP-N-acetyl-alpha-D-muramate + L-alanine + ATP = UDP-N-acetyl-alpha-D-muramoyl-L-alanine + ADP + phosphate + H(+). The protein operates within cell wall biogenesis; peptidoglycan biosynthesis. Cell wall formation. The protein is UDP-N-acetylmuramate--L-alanine ligase of Streptococcus equi subsp. zooepidemicus (strain MGCS10565).